Reading from the N-terminus, the 249-residue chain is tRNA pseudouridine synthase A (249 aa).

The active-site Nucleophile is the D52. Residue Y110 coordinates substrate.

Belongs to the tRNA pseudouridine synthase TruA family. Homodimer.

The enzyme catalyses uridine(38/39/40) in tRNA = pseudouridine(38/39/40) in tRNA. Functionally, formation of pseudouridine at positions 38, 39 and 40 in the anticodon stem and loop of transfer RNAs. This is tRNA pseudouridine synthase A from Exiguobacterium sibiricum (strain DSM 17290 / CCUG 55495 / CIP 109462 / JCM 13490 / 255-15).